Here is a 200-residue protein sequence, read N- to C-terminus: Elongation factor Ts (200 aa).

Positions 80–83 are involved in Mg(2+) ion dislocation from EF-Tu; sequence TDFV.

This sequence belongs to the EF-Ts family.

It is found in the cytoplasm. Its function is as follows. Associates with the EF-Tu.GDP complex and induces the exchange of GDP to GTP. It remains bound to the aminoacyl-tRNA.EF-Tu.GTP complex up to the GTP hydrolysis stage on the ribosome. This Caldanaerobacter subterraneus subsp. tengcongensis (strain DSM 15242 / JCM 11007 / NBRC 100824 / MB4) (Thermoanaerobacter tengcongensis) protein is Elongation factor Ts.